The primary structure comprises 240 residues: Ribonuclease 3 (240 aa).

The RNase III domain maps to 4-134 (SRQPLLDALG…LLGAIYLQHG (131 aa)). Position 44 (Glu44) interacts with Mg(2+). Asp48 is a catalytic residue. Positions 120 and 123 each coordinate Mg(2+). Glu123 is an active-site residue. The region spanning 161–229 (DWKTSLQELT…AAAAWKALEV (69 aa)) is the DRBM domain.

Belongs to the ribonuclease III family. Homodimer. Mg(2+) is required as a cofactor.

Its subcellular location is the cytoplasm. The enzyme catalyses Endonucleolytic cleavage to 5'-phosphomonoester.. Functionally, digests double-stranded RNA. Involved in the processing of primary rRNA transcript to yield the immediate precursors to the large and small rRNAs (23S and 16S). Processes some mRNAs, and tRNAs when they are encoded in the rRNA operon. Processes pre-crRNA and tracrRNA of type II CRISPR loci if present in the organism. The protein is Ribonuclease 3 of Mycobacterium bovis (strain ATCC BAA-935 / AF2122/97).